The sequence spans 99 residues: Large ribosomal subunit protein uL23 (99 aa).

The protein belongs to the universal ribosomal protein uL23 family. As to quaternary structure, part of the 50S ribosomal subunit. Contacts protein L29, and trigger factor when it is bound to the ribosome.

In terms of biological role, one of the early assembly proteins it binds 23S rRNA. One of the proteins that surrounds the polypeptide exit tunnel on the outside of the ribosome. Forms the main docking site for trigger factor binding to the ribosome. This Clavibacter michiganensis subsp. michiganensis (strain NCPPB 382) protein is Large ribosomal subunit protein uL23.